Here is a 231-residue protein sequence, read N- to C-terminus: Deoxyribose-phosphate aldolase (231 aa).

The active-site Proton donor/acceptor is Asp86. Lys147 (schiff-base intermediate with acetaldehyde) is an active-site residue. The active-site Proton donor/acceptor is the Lys172. Positions 206 to 231 (WQAETAGETVTEPESDRDGADTTDGY) are disordered.

This sequence belongs to the DeoC/FbaB aldolase family. DeoC type 1 subfamily.

The protein resides in the cytoplasm. The catalysed reaction is 2-deoxy-D-ribose 5-phosphate = D-glyceraldehyde 3-phosphate + acetaldehyde. The protein operates within carbohydrate degradation; 2-deoxy-D-ribose 1-phosphate degradation; D-glyceraldehyde 3-phosphate and acetaldehyde from 2-deoxy-alpha-D-ribose 1-phosphate: step 2/2. In terms of biological role, catalyzes a reversible aldol reaction between acetaldehyde and D-glyceraldehyde 3-phosphate to generate 2-deoxy-D-ribose 5-phosphate. In Haloarcula marismortui (strain ATCC 43049 / DSM 3752 / JCM 8966 / VKM B-1809) (Halobacterium marismortui), this protein is Deoxyribose-phosphate aldolase.